The primary structure comprises 366 residues: Erythronate-4-phosphate dehydrogenase (366 aa).

Ser46 and Thr67 together coordinate substrate. Positions 147 and 175 each coordinate NAD(+). Arg208 is an active-site residue. Asp228 contributes to the NAD(+) binding site. Glu233 is a catalytic residue. His250 functions as the Proton donor in the catalytic mechanism. Residue Gly253 coordinates NAD(+). Tyr254 provides a ligand contact to substrate.

The protein belongs to the D-isomer specific 2-hydroxyacid dehydrogenase family. PdxB subfamily. Homodimer.

The protein localises to the cytoplasm. The catalysed reaction is 4-phospho-D-erythronate + NAD(+) = (R)-3-hydroxy-2-oxo-4-phosphooxybutanoate + NADH + H(+). The protein operates within cofactor biosynthesis; pyridoxine 5'-phosphate biosynthesis; pyridoxine 5'-phosphate from D-erythrose 4-phosphate: step 2/5. Catalyzes the oxidation of erythronate-4-phosphate to 3-hydroxy-2-oxo-4-phosphonooxybutanoate. This is Erythronate-4-phosphate dehydrogenase from Coxiella burnetii (strain RSA 331 / Henzerling II).